We begin with the raw amino-acid sequence, 357 residues long: Putative DENN domain-containing protein 10 B (357 aa).

Positions 1-140 constitute a uDENN domain; the sequence is MAAAELADTQ…TKGICQSEEN (140 aa). Positions 159–299 constitute a cDENN domain; that stretch reads IKDIVSQFGM…PEKSESQVIQ (141 aa). Residues 301 to 357 enclose the dDENN domain; the sequence is IALKTREIFTNLAPFSEVSADGEKRVLNLEALKQKRFPPATENFLYHLAAAEQMLKI.

It belongs to the DENND10 family.

It localises to the late endosome. In terms of biological role, may be a guanine nucleotide exchange factor (GEF). The chain is Putative DENN domain-containing protein 10 B from Homo sapiens (Human).